Consider the following 88-residue polypeptide: CRISPR-associated endoribonuclease Cas2 3 (88 aa).

D9 is a binding site for Mg(2+).

It belongs to the CRISPR-associated endoribonuclease Cas2 protein family. As to quaternary structure, homodimer, forms a heterotetramer with a Cas1 homodimer. The cofactor is Mg(2+).

Functionally, CRISPR (clustered regularly interspaced short palindromic repeat), is an adaptive immune system that provides protection against mobile genetic elements (viruses, transposable elements and conjugative plasmids). CRISPR clusters contain sequences complementary to antecedent mobile elements and target invading nucleic acids. CRISPR clusters are transcribed and processed into CRISPR RNA (crRNA). Functions as a ssRNA-specific endoribonuclease. Involved in the integration of spacer DNA into the CRISPR cassette. The polypeptide is CRISPR-associated endoribonuclease Cas2 3 (Thermodesulfovibrio yellowstonii (strain ATCC 51303 / DSM 11347 / YP87)).